A 339-amino-acid chain; its full sequence is Ferrochelatase (339 aa).

Positions 209 and 290 each coordinate Fe cation.

Belongs to the ferrochelatase family.

It localises to the cytoplasm. It carries out the reaction heme b + 2 H(+) = protoporphyrin IX + Fe(2+). It functions in the pathway porphyrin-containing compound metabolism; protoheme biosynthesis; protoheme from protoporphyrin-IX: step 1/1. Its function is as follows. Catalyzes the ferrous insertion into protoporphyrin IX. This is Ferrochelatase from Rhizobium meliloti (strain 1021) (Ensifer meliloti).